Reading from the N-terminus, the 501-residue chain is Glycine betaine/proline/ectoine/pipecolic acid transporter OusA (501 aa).

Residues 1 to 38 (MKLKRKRVKPIALDDVTIIDDGRLRKAITAAALGNAME) are Cytoplasmic-facing. A helical transmembrane segment spans residues 39-59 (WFDFGVYGFVAYALGQVFFPG). Residues 60–66 (ADPGVQM) are Periplasmic-facing. The helical transmembrane segment at 67-87 (IAALATFSVPFLIRPLGGVFF) threads the bilayer. Residues 88-98 (GALGDKYGRQK) lie on the Cytoplasmic side of the membrane. A helical membrane pass occupies residues 99-119 (ILAITIIIMSISTFCIGLIPS). The Periplasmic segment spans residues 120–122 (YER). A helical membrane pass occupies residues 123 to 143 (IGIWAPILLLLAKMAQGFSVG). The Cytoplasmic segment spans residues 144–170 (GEYTGASIFVAEYSPDRKRGFMGSWLD). The helical transmembrane segment at 171–191 (FGSIAGFVLGAGVVVLISTLI) threads the bilayer. Residues 192–195 (GEQA) are Periplasmic-facing. A helical transmembrane segment spans residues 196–216 (FLAWGWRLPFFLALPLGLIGL). The Cytoplasmic portion of the chain corresponds to 217–261 (YLRHALEETPAFRQHVEKLEQNDRDGLKAGPGVSFREIATHHWKS). The chain crosses the membrane as a helical span at residues 262-282 (LLVCIGLVIATNVTYYMLLTY). Residues 283 to 298 (MPSYLSHSLHYSENHG) are Periplasmic-facing. The helical transmembrane segment at 299-319 (VLIIIAIMIGMLFVQPVMGLL) threads the bilayer. The Cytoplasmic portion of the chain corresponds to 320 to 326 (SDRFGRK). The helical transmembrane segment at 327 to 347 (PFVVIGSVAMFFLAVPSFMLI) threads the bilayer. Residues 348–350 (NSD) are Periplasmic-facing. Residues 351–371 (IIGLIFLGLLMLAVILNAFTG) form a helical membrane-spanning segment. Residues 372-391 (VMASTLPALFPTHIRYSALA) are Cytoplasmic-facing. Residues 392 to 412 (SAFNISVLIAGLTPTVAAWLV) form a helical membrane-spanning segment. Residues 413–417 (ESSQN) lie on the Periplasmic side of the membrane. The chain crosses the membrane as a helical span at residues 418-438 (LYMPAYYLMVIAVIGLLTGLF). Residues 439–501 (MKETANKPLK…LVAQHPRIND (63 aa)) are Cytoplasmic-facing. The stretch at 461–495 (KEILQEHHDNIEHKIEDITQQIAELEAKRQLLVAQ) forms a coiled coil.

It belongs to the major facilitator superfamily. Sugar transporter (TC 2.A.1.1) family.

Its subcellular location is the cell inner membrane. Involved in uptake and accumulation of various osmoprotectants. Allows the uptake of glycine betaine, proline, ectoine, and pipecolic acid. May be a contributory factor in the infection progression within the host. This is Glycine betaine/proline/ectoine/pipecolic acid transporter OusA from Dickeya dadantii (strain 3937) (Erwinia chrysanthemi (strain 3937)).